A 562-amino-acid polypeptide reads, in one-letter code: Adenylate kinase isoenzyme 5 (562 aa).

Adenylate kinase regions lie at residues 133-316 and 377-559; these read KIIL…MAVD and KIIF…TAID. 142–147 serves as a coordination point for ATP; that stretch reads GSGKGT. The interval 162-193 is NMP 1; that stretch reads SVGELLRKKIHSTSSNRKWSLIAKIITTGELA. Residues Arg-168, 191-193, 219-222, and Gln-226 contribute to the AMP site; these read ELA and GFPR. The LID 1 stretch occupies residues 256-266; it reads KRAEQQGRPDD. An ATP-binding site is contributed by Arg-257. Residues Arg-263 and Arg-274 each coordinate AMP. 386–391 lines the ATP pocket; sequence GSGKGT. Positions 406 to 435 are NMP 2; sequence STGELLREELASESERSKLIRDIMERGDLV. AMP contacts are provided by residues Thr-407, Arg-412, 433–435, 462–465, and Gln-469; these read DLV and GYPR. Residues 499 to 509 form an LID 2 region; sequence QRSRSSLPVDD. Arg-500 provides a ligand contact to ATP. Arg-517 is an AMP binding site. Gly-545 provides a ligand contact to ATP.

It belongs to the adenylate kinase family. In terms of assembly, monomer. Interacts with YWHAZ. In terms of tissue distribution, brain specific.

Its subcellular location is the cytoplasm. The catalysed reaction is AMP + ATP = 2 ADP. It catalyses the reaction a 2'-deoxyribonucleoside 5'-diphosphate + ATP = a 2'-deoxyribonucleoside 5'-triphosphate + ADP. The enzyme catalyses a ribonucleoside 5'-diphosphate + ATP = a ribonucleoside 5'-triphosphate + ADP. In terms of biological role, nucleoside monophosphate (NMP) kinase that catalyzes the reversible transfer of the terminal phosphate group between nucleoside triphosphates and monophosphates. Active on AMP and dAMP with ATP as a donor. When GTP is used as phosphate donor, the enzyme phosphorylates AMP, CMP, and to a small extent dCMP. Also displays broad nucleoside diphosphate kinase activity. The sequence is that of Adenylate kinase isoenzyme 5 (AK5) from Homo sapiens (Human).